A 117-amino-acid polypeptide reads, in one-letter code: UPF0295 protein YgzB (117 aa).

Helical transmembrane passes span 13 to 33 and 41 to 61; these read TFAL…IFFK and LFMI…FWIG.

This sequence belongs to the UPF0295 family.

Its subcellular location is the cell membrane. In Bacillus subtilis (strain 168), this protein is UPF0295 protein YgzB (ygzB).